A 423-amino-acid polypeptide reads, in one-letter code: Histidine--tRNA ligase (423 aa).

This sequence belongs to the class-II aminoacyl-tRNA synthetase family. As to quaternary structure, homodimer.

The protein localises to the cytoplasm. It catalyses the reaction tRNA(His) + L-histidine + ATP = L-histidyl-tRNA(His) + AMP + diphosphate + H(+). This chain is Histidine--tRNA ligase, found in Haemophilus influenzae (strain PittEE).